The sequence spans 150 residues: Cytochrome c oxidase subunit 5A, mitochondrial (150 aa).

A mitochondrion-targeting transit peptide spans 1 to 41 (MLGTALRRCAVAAASRAGSRGLLHPTPVPGPTAAIQSIRCY). Residues 2 to 17 (LGTALRRCAVAAASRA) carry the SIFI-degron motif. N6-acetyllysine is present on residues Lys87 and Lys113. The residue at position 141 (Thr141) is a Phosphothreonine.

Belongs to the cytochrome c oxidase subunit 5A family. In terms of assembly, component of the cytochrome c oxidase (complex IV, CIV), a multisubunit enzyme composed of 14 subunits. The complex is composed of a catalytic core of 3 subunits MT-CO1, MT-CO2 and MT-CO3, encoded in the mitochondrial DNA, and 11 supernumerary subunits COX4I, COX5A, COX5B, COX6A, COX6B, COX6C, COX7A, COX7B, COX7C, COX8 and NDUFA4, which are encoded in the nuclear genome. The complex exists as a monomer or a dimer and forms supercomplexes (SCs) in the inner mitochondrial membrane with NADH-ubiquinone oxidoreductase (complex I, CI) and ubiquinol-cytochrome c oxidoreductase (cytochrome b-c1 complex, complex III, CIII), resulting in different assemblies (supercomplex SCI(1)III(2)IV(1) and megacomplex MCI(2)III(2)IV(2)). Interacts with AFG1L. Interacts with RAB5IF. Post-translationally, in response to mitochondrial stress, the precursor protein is ubiquitinated by the SIFI complex in the cytoplasm before mitochondrial import, leading to its degradation. Within the SIFI complex, UBR4 initiates ubiquitin chain that are further elongated or branched by KCMF1.

It is found in the mitochondrion inner membrane. Its pathway is energy metabolism; oxidative phosphorylation. Component of the cytochrome c oxidase, the last enzyme in the mitochondrial electron transport chain which drives oxidative phosphorylation. The respiratory chain contains 3 multisubunit complexes succinate dehydrogenase (complex II, CII), ubiquinol-cytochrome c oxidoreductase (cytochrome b-c1 complex, complex III, CIII) and cytochrome c oxidase (complex IV, CIV), that cooperate to transfer electrons derived from NADH and succinate to molecular oxygen, creating an electrochemical gradient over the inner membrane that drives transmembrane transport and the ATP synthase. Cytochrome c oxidase is the component of the respiratory chain that catalyzes the reduction of oxygen to water. Electrons originating from reduced cytochrome c in the intermembrane space (IMS) are transferred via the dinuclear copper A center (CU(A)) of subunit 2 and heme A of subunit 1 to the active site in subunit 1, a binuclear center (BNC) formed by heme A3 and copper B (CU(B)). The BNC reduces molecular oxygen to 2 water molecules using 4 electrons from cytochrome c in the IMS and 4 protons from the mitochondrial matrix. The polypeptide is Cytochrome c oxidase subunit 5A, mitochondrial (COX5A) (Otolemur crassicaudatus (Brown greater galago)).